The sequence spans 856 residues: Centrosomal protein of 97 kDa (856 aa).

LRR repeat units follow at residues 37–58 (DVHT…EKCK), 59–80 (QLIQ…AKLT), 81–102 (QLRV…KDLV), 103–124 (HLEW…NSCT), 125–146 (ALQH…SKLI), 147–168 (SLKT…PAYL), 171–192 (NLSI…SFLA), and 196–205 (ELEQLSIMNN). An LRRCT domain is found at 211–249 (TPSIPGFDYRPFIVSWCLNLRVLDGYVISQKESLKAEWL). The CCP110-binding stretch occupies residues 300-742 (HQRQLMSQSQ…KCVKDRDSEA (443 aa)). Phosphoserine is present on residues S308 and S410. Residues 430–451 (DDGADEFTKGLENQDEDKDKEK) are disordered. At S497 the chain carries Phosphoserine. Residues 498–513 (LTSLPESAGHSASRTE) are compositionally biased toward polar residues. Residues 498-525 (LTSLPESAGHSASRTEANSEEAMSPATS) are disordered. A Phosphoserine modification is found at S521. T534 is subject to Phosphothreonine. The IQ domain occupies 550 to 579 (LNAAATKLQACWRGFYTRNYNQQAKGVRYE). The tract at residues 579–853 (EIRLRRMQEH…FQGLHVGVTV (275 aa)) is interaction with MPHOSPH9. 2 disordered regions span residues 646–672 (PPIS…DQSS) and 737–840 (DRDS…PPEC). Basic and acidic residues predominate over residues 737–752 (DRDSEATAEEHSDCSR). Polar residues predominate over residues 753 to 773 (ESSASEQDNTLLQQYLTSVQQ). Phosphoserine is present on S755. The segment covering 776-787 (DAAEAADSDDVA) has biased composition (acidic residues). Residues 799–811 (ERFDASSDSETHR) are compositionally biased toward basic and acidic residues. Positions 812–833 (VASTSQDEISQTPENCQLNEEA) are enriched in polar residues.

As to quaternary structure, interacts with CALM1, CEP76, KIF24 and TALPID3. Interacts with CCP110. ENKD1 competes with CEP97 for binding to CCP110, destabilizing the interaction between CP110 and CEP97 which promotes the removal of CCP110 and CEP97 from the mother centriole and allows the initiation of ciliogenesis. Via its interaction with CCP110, may indirectly interact with HERC2 and NEURL4. Interacts with MPHOSPH9.

It is found in the cytoplasm. It localises to the cytoskeleton. Its subcellular location is the microtubule organizing center. The protein localises to the centrosome. The protein resides in the centriole. Its function is as follows. Acts as a key negative regulator of ciliogenesis in collaboration with CCP110 by capping the mother centriole thereby preventing cilia formation. Required for recruitment of CCP110 to the centrosome. This is Centrosomal protein of 97 kDa (Cep97) from Mus musculus (Mouse).